Consider the following 323-residue polypeptide: UDP-N-acetylenolpyruvoylglucosamine reductase (323 aa).

Residues 33–214 enclose the FAD-binding PCMH-type domain; it reads IGGPAEALFC…LSAVFTLTHG (182 aa). Ser-243 acts as the Proton donor in catalysis. Residue Glu-315 is part of the active site.

Belongs to the MurB family. Requires FAD as cofactor.

It localises to the cytoplasm. The catalysed reaction is UDP-N-acetyl-alpha-D-muramate + NADP(+) = UDP-N-acetyl-3-O-(1-carboxyvinyl)-alpha-D-glucosamine + NADPH + H(+). It participates in cell wall biogenesis; peptidoglycan biosynthesis. Cell wall formation. This chain is UDP-N-acetylenolpyruvoylglucosamine reductase, found in Treponema denticola (strain ATCC 35405 / DSM 14222 / CIP 103919 / JCM 8153 / KCTC 15104).